A 488-amino-acid polypeptide reads, in one-letter code: MDSSCRTPPSNSWVYPTVILCLFGFFSMFRPSEAFLIPFLSEPSKNLTSPEMTNEILPVWTYSYLATLPPVFVLTDYLRYKPVIMLHVVAFATSYLFLLFGQGVMLMQTAEFFFGVVSATEIAYFAYIYSMVSPEHYQKVSSYCRSITLVAYTAGSVLAQLLVSLTNLPYSSLFYISLACVSVAFFFSLFLPMPKKSMFFHAKSDRDDCPKPLEQCTVPKEAQSNRTHSELFANSKNLEDREMSNPDPENSALRHFAHWFQDLKECYSSKHLVYWSLWWAFATAGYNQILNYVQVLWEHKAPSQDSSIYNGAVEAIATFGGALASFSVGYLKVNWDLLGELGLAVFSAVIAGSLFLMNYSRSIWVCYAGYLLVKSSYSFLITIAVFQIAVNLSLERYALVFGIDTFIALVIQTIMTMIVVDQRGLQLPVTTQFLVYGSYFAVIAGVFLMRSIYILCSAKCRKEVQNLATTRSPNEPHPQEPSNVSTKF.

Over 1–8 (MDSSCRTP) the chain is Cytoplasmic. Residues 9–29 (PSNSWVYPTVILCLFGFFSMF) form a helical membrane-spanning segment. The Extracellular portion of the chain corresponds to 30–54 (RPSEAFLIPFLSEPSKNLTSPEMTN). Asparagine 46 carries N-linked (GlcNAc...) asparagine glycosylation. Residues 55 to 75 (EILPVWTYSYLATLPPVFVLT) form a helical membrane-spanning segment. The Cytoplasmic segment spans residues 76–82 (DYLRYKP). A helical membrane pass occupies residues 83–103 (VIMLHVVAFATSYLFLLFGQG). At 104–111 (VMLMQTAE) the chain is on the extracellular side. The helical transmembrane segment at 112-132 (FFFGVVSATEIAYFAYIYSMV) threads the bilayer. The Cytoplasmic portion of the chain corresponds to 133–145 (SPEHYQKVSSYCR). A helical transmembrane segment spans residues 146 to 166 (SITLVAYTAGSVLAQLLVSLT). The Extracellular segment spans residues 167–172 (NLPYSS). The helical transmembrane segment at 173–193 (LFYISLACVSVAFFFSLFLPM) threads the bilayer. Residues 194–276 (PKKSMFFHAK…YSSKHLVYWS (83 aa)) are Cytoplasmic-facing. The chain crosses the membrane as a helical span at residues 277-297 (LWWAFATAGYNQILNYVQVLW). Over 298 to 310 (EHKAPSQDSSIYN) the chain is Extracellular. The helical transmembrane segment at 311 to 331 (GAVEAIATFGGALASFSVGYL) threads the bilayer. Over 332-335 (KVNW) the chain is Cytoplasmic. The chain crosses the membrane as a helical span at residues 336–356 (DLLGELGLAVFSAVIAGSLFL). Residues 357–369 (MNYSRSIWVCYAG) lie on the Extracellular side of the membrane. Asparagine 358 is a glycosylation site (N-linked (GlcNAc...) asparagine). A helical transmembrane segment spans residues 370-390 (YLLVKSSYSFLITIAVFQIAV). Topologically, residues 391–399 (NLSLERYAL) are cytoplasmic. The helical transmembrane segment at 400–420 (VFGIDTFIALVIQTIMTMIVV) threads the bilayer. Residues 421 to 428 (DQRGLQLP) are Extracellular-facing. The chain crosses the membrane as a helical span at residues 429–449 (VTTQFLVYGSYFAVIAGVFLM). Residues 450 to 488 (RSIYILCSAKCRKEVQNLATTRSPNEPHPQEPSNVSTKF) are Cytoplasmic-facing. The interval 469-488 (TTRSPNEPHPQEPSNVSTKF) is disordered.

Belongs to the reduced folate carrier (RFC) transporter (TC 2.A.48) family. In terms of tissue distribution, high expression in kidney, brain, lung and small intestine. Detected in pancreatic acinar cells (at protein level). Also expressed strongly in pancreatic islet cells.

Its subcellular location is the membrane. It catalyses the reaction thiamine(out) + H(+)(in) = thiamine(in) + H(+)(out). Functionally, high-affinity transporter for the intake of thiamine. Unlike the human ortholog, lacks H(+)-dependent pyridoxine transport activity due to an absence of seven critical amino-acids required for pyridoxine transport. This chain is Thiamine transporter 2 (Slc19a3), found in Mus musculus (Mouse).